We begin with the raw amino-acid sequence, 136 residues long: Protein NrdI (136 aa).

This sequence belongs to the NrdI family.

In terms of biological role, probably involved in ribonucleotide reductase function. The chain is Protein NrdI from Salmonella typhi.